A 224-amino-acid polypeptide reads, in one-letter code: MIDALRLMAWLSPTYPVGAFAYSHGLEWAVECGDVRDAATLADWLSDVLERGAGRNDMILCACAHRAVAARDDADLVAINDLALALAPSRELHLETSQQGRSFLDATLQAWPCPALAEVAARLEGRLAYPIAVGAAAGAHGVAREATVAAYGLAFVQNLVSAALRVAPVGQSAGTAVLASLTPRVAALAETLHAADRDALGSATLRLDLGSFRHETQYSRIFRS.

Belongs to the UreF family. As to quaternary structure, ureD, UreF and UreG form a complex that acts as a GTP-hydrolysis-dependent molecular chaperone, activating the urease apoprotein by helping to assemble the nickel containing metallocenter of UreC. The UreE protein probably delivers the nickel.

Its subcellular location is the cytoplasm. Required for maturation of urease via the functional incorporation of the urease nickel metallocenter. The sequence is that of Urease accessory protein UreF from Methylorubrum populi (strain ATCC BAA-705 / NCIMB 13946 / BJ001) (Methylobacterium populi).